We begin with the raw amino-acid sequence, 185 residues long: Ribosome-recycling factor (185 aa).

It belongs to the RRF family.

The protein resides in the cytoplasm. Functionally, responsible for the release of ribosomes from messenger RNA at the termination of protein biosynthesis. May increase the efficiency of translation by recycling ribosomes from one round of translation to another. The chain is Ribosome-recycling factor from Geobacter sulfurreducens (strain ATCC 51573 / DSM 12127 / PCA).